A 207-amino-acid polypeptide reads, in one-letter code: Small ribosomal subunit protein uS4 (207 aa).

Residues Asp30–Asn54 form a disordered region. The segment covering Gly42–Gly53 has biased composition (polar residues). The S4 RNA-binding domain maps to Ser97–Leu160.

This sequence belongs to the universal ribosomal protein uS4 family. As to quaternary structure, part of the 30S ribosomal subunit. Contacts protein S5. The interaction surface between S4 and S5 is involved in control of translational fidelity.

Its function is as follows. One of the primary rRNA binding proteins, it binds directly to 16S rRNA where it nucleates assembly of the body of the 30S subunit. With S5 and S12 plays an important role in translational accuracy. This Cupriavidus taiwanensis (strain DSM 17343 / BCRC 17206 / CCUG 44338 / CIP 107171 / LMG 19424 / R1) (Ralstonia taiwanensis (strain LMG 19424)) protein is Small ribosomal subunit protein uS4.